Reading from the N-terminus, the 284-residue chain is F-box only protein 6 (284 aa).

Residues 1–48 (MVNINELPENILLELFTHVPAPQLLRNCRLVCSLWRDLIDVMTLWKRK) form the F-box domain. Residues 69 to 250 (FYILCSLQRN…VTNSSIIVSH (182 aa)) form the FBA domain. Residues serine 249, serine 268, serine 275, serine 278, and serine 283 each carry the phosphoserine modification.

Part of a SCF (SKP1-cullin-F-box) protein ligase complex. Interacts with VCP, CHEK1 and CUL1.

The protein localises to the cytoplasm. Its pathway is protein modification; protein ubiquitination. Functionally, substrate-recognition component of some SCF (SKP1-CUL1-F-box protein)-type E3 ubiquitin ligase complexes. Involved in endoplasmic reticulum-associated degradation pathway (ERAD) for misfolded lumenal proteins by recognizing and binding sugar chains on unfolded glycoproteins that are retrotranslocated into the cytosol and promoting their ubiquitination and subsequent degradation. Able to recognize and bind denatured glycoproteins, which are modified with not only high-mannose but also complex-type oligosaccharides. Also recognizes sulfated glycans. Also involved in DNA damage response by specifically recognizing activated CHEK1 (phosphorylated on 'Ser-345'), promoting its ubiquitination and degradation. Ubiquitination of CHEK1 is required to ensure that activated CHEK1 does not accumulate as cells progress through S phase, or when replication forks encounter transient impediments during normal DNA replication. In Rattus norvegicus (Rat), this protein is F-box only protein 6 (Fbxo6).